The chain runs to 37 residues: MKVRASVKAICRNCKIIKRHGVVRVICSEPKHKQRQG.

The protein belongs to the bacterial ribosomal protein bL36 family.

This is Large ribosomal subunit protein bL36B from Aeromonas salmonicida (strain A449).